The primary structure comprises 225 residues: 7-carboxy-7-deazaguanine synthase (225 aa).

Residues 12–14 (IQG) and arginine 27 contribute to the substrate site. The region spanning 18–225 (YIGVRQLFVR…PQVHKYLGVR (208 aa)) is the Radical SAM core domain. Positions 31, 35, and 38 each coordinate [4Fe-4S] cluster. Threonine 40 provides a ligand contact to Mg(2+). Position 80 (threonine 80) interacts with substrate. An S-adenosyl-L-methionine-binding site is contributed by glycine 82.

It belongs to the radical SAM superfamily. 7-carboxy-7-deazaguanine synthase family. In terms of assembly, homodimer. The cofactor is [4Fe-4S] cluster. S-adenosyl-L-methionine serves as cofactor. It depends on Mg(2+) as a cofactor.

The enzyme catalyses 6-carboxy-5,6,7,8-tetrahydropterin + H(+) = 7-carboxy-7-deazaguanine + NH4(+). It participates in purine metabolism; 7-cyano-7-deazaguanine biosynthesis. Its function is as follows. Catalyzes the complex heterocyclic radical-mediated conversion of 6-carboxy-5,6,7,8-tetrahydropterin (CPH4) to 7-carboxy-7-deazaguanine (CDG), a step common to the biosynthetic pathways of all 7-deazapurine-containing compounds. This Archaeoglobus fulgidus (strain ATCC 49558 / DSM 4304 / JCM 9628 / NBRC 100126 / VC-16) protein is 7-carboxy-7-deazaguanine synthase.